The sequence spans 523 residues: Cytoplasmic dynein 1 light intermediate chain 1 (523 aa).

Positions 1–45 (MAAVGRVGSFGSSPPGLASTYASGPLANELASGSGGPAAGDDEDG) are disordered. 74–81 (GEDGAGKT) provides a ligand contact to ATP. Serine 207 carries the post-translational modification Phosphoserine. Threonine 213 is subject to Phosphothreonine. Disordered regions lie at residues 387 to 434 (PPTA…DPNM) and 457 to 523 (GSPG…GEAS). Phosphoserine is present on residues serine 398 and serine 405. Phosphothreonine is present on threonine 408. A phosphoserine mark is found at serine 412, serine 419, serine 421, and serine 427. Over residues 412 to 421 (SVSSNVASVS) the composition is skewed to low complexity. Residues 458–473 (SPGGPGVGGSPGGGAA) are compositionally biased toward gly residues. Low complexity predominate over residues 474 to 483 (GASTSLPPSA). Residues serine 486 and serine 510 each carry the phosphoserine modification. Residues threonine 512 and threonine 513 each carry the phosphothreonine modification. Serine 516 bears the Phosphoserine mark.

Belongs to the dynein light intermediate chain family. As to quaternary structure, homodimer. The cytoplasmic dynein 1 complex consists of two catalytic heavy chains (HCs) and a number of non-catalytic subunits presented by intermediate chains (ICs), light intermediate chains (LICs) and light chains (LCs); the composition seems to vary in respect to the IC, LIC and LC composition. The heavy chain homodimer serves as a scaffold for the probable homodimeric assembly of the respective non-catalytic subunits. The ICs and LICs bind directly to the HC dimer and the LCs assemble on the IC dimer. Self-associates. Interacts with DYNC1H1; DYNC1LI1 and DYNC1LI2 bind mutually exclusive to DYNC1H1. Interacts with PCNT. Forms a complex with RAB11FIP3 and RAB11A1; the interaction between DYNC1LI1 and RAB11FIP3 is direct and induces DYNC1LI1 localization onto endosomal membrane; the complex regulates endocytic trafficking. Interacts with RUFY3. Post-translationally, phosphorylated during mitosis but not in interphase.

It is found in the cytoplasm. The protein resides in the chromosome. It localises to the centromere. Its subcellular location is the kinetochore. The protein localises to the cytoskeleton. It is found in the spindle pole. The protein resides in the recycling endosome membrane. Its function is as follows. Acts as one of several non-catalytic accessory components of the cytoplasmic dynein 1 complex that are thought to be involved in linking dynein to cargos and to adapter proteins that regulate dynein function. Cytoplasmic dynein 1 acts as a motor for the intracellular retrograde motility of vesicles and organelles along microtubules. May play a role in binding dynein to membranous organelles or chromosomes. Probably involved in the microtubule-dependent transport of pericentrin. Is required for progress through the spindle assembly checkpoint. The phosphorylated form appears to be involved in the selective removal of MAD1L1 and MAD1L2 but not BUB1B from kinetochores. Forms a functional Rab11/RAB11FIP3/dynein complex onto endosomal membrane that regulates the movement of peripheral sorting endosomes (SE) along microtubule tracks toward the microtubule organizing center/centrosome, generating the endosomal recycling compartment (ERC). The chain is Cytoplasmic dynein 1 light intermediate chain 1 (Dync1li1) from Rattus norvegicus (Rat).